The primary structure comprises 433 residues: Xylose isomerase (433 aa).

Active-site residues include His-99 and Asp-102. Residues Glu-230, Glu-266, His-269, Asp-294, Asp-305, Asp-307, and Asp-337 each coordinate Mg(2+).

This sequence belongs to the xylose isomerase family. In terms of assembly, homotetramer. Mg(2+) is required as a cofactor.

Its subcellular location is the cytoplasm. The catalysed reaction is alpha-D-xylose = alpha-D-xylulofuranose. The protein is Xylose isomerase of Cereibacter sphaeroides (strain ATCC 17025 / ATH 2.4.3) (Rhodobacter sphaeroides).